The primary structure comprises 547 residues: MAQQEAEIIRPLANFSPSLWGDQFIKNDSDAKVEDKISKTIEVLKEEVKSMLTATGTKMVDTMNLIDTLERLGVSYHFEHEIEEILQQFFNLNTDYNDEAYDLYTVATHFRLFRQHGHRITCADIFGRWRDENGKFHEGLKDDAKGLLSLYEASYLRTRGETILDEALDFTTASLKSIAPNLESPLRRQVEHALVQQLHWGNPRIEARNFISLYEEYEDKDESLLRFAKLDYNLLQMMHKEELHEVSRWWKELDLVAKLPYARDRVVECFFWAMGVYHEPQYSRARVMLTKTIAMTSIIDDTYDAYGTIEELDIFTEAIERWNVEEMKRLPEYIKPFYKALLELYEQFEEELAKEGRSYATHYAIESLKELVRSYHVEAKWFIQGYLPPFEEYLKNALITCTYCYHTTTSLLGVESAVREDFEWLSKKPKMLVAGLLICRVIDDIATYEVEKDRGQIATGIESYMRDNGATKEEAITKFFEIANDAWKDINEECMRPSPHSRDVLMRILNLERIIDVTYKGNEDGYTQPEKVLKPHIIALFVDPIQI.

Positions 300, 304, 443, and 451 each coordinate Mg(2+). A DDXXD motif motif is present at residues 300–304 (DDTYD).

Belongs to the terpene synthase family. Tpsa subfamily. Mg(2+) serves as cofactor. Requires Mn(2+) as cofactor. As to expression, expressed in leaves.

The protein localises to the plastid. It localises to the chloroplast. It carries out the reaction (2E,6E)-farnesyl diphosphate = germacrene A + diphosphate. The enzyme catalyses (2E,6E)-farnesyl diphosphate = (1S,2S,4R)-beta-elemene + diphosphate. It participates in secondary metabolite biosynthesis; terpenoid biosynthesis. Its function is as follows. Sesquiterpene synthase involved in the biosynthesis of volatile compounds widely used in aromatherapy and folk medicine, and present in culinary herbs. Mediates the conversion of (2E,6E)-farnesyl diphosphate (FPP) into germacrene A and beta-elemene. Not able to use (2E)-geranyl diphosphate (GPP) as substrate. The chain is Germacrene A synthase from Lavandula pedunculata subsp. lusitanica (French lavender).